Consider the following 425-residue polypeptide: Adenosylhomocysteinase (425 aa).

Substrate contacts are provided by threonine 60, aspartate 132, and glutamate 157. Residue 158-160 participates in NAD(+) binding; that stretch reads TTT. Residues lysine 187 and aspartate 191 each contribute to the substrate site. Residues asparagine 192, 221-226, glutamate 244, asparagine 279, 300-302, and asparagine 347 contribute to the NAD(+) site; these read GYGWCG and SGH.

Belongs to the adenosylhomocysteinase family. It depends on NAD(+) as a cofactor.

It localises to the cytoplasm. The enzyme catalyses S-adenosyl-L-homocysteine + H2O = L-homocysteine + adenosine. It participates in amino-acid biosynthesis; L-homocysteine biosynthesis; L-homocysteine from S-adenosyl-L-homocysteine: step 1/1. Its function is as follows. May play a key role in the regulation of the intracellular concentration of adenosylhomocysteine. In Synechocystis sp. (strain ATCC 27184 / PCC 6803 / Kazusa), this protein is Adenosylhomocysteinase.